The chain runs to 173 residues: Crossover junction endodeoxyribonuclease RuvC (173 aa).

Residues Asp-8, Glu-67, and Asp-139 contribute to the active site. Mg(2+) contacts are provided by Asp-8, Glu-67, and Asp-139.

Belongs to the RuvC family. As to quaternary structure, homodimer which binds Holliday junction (HJ) DNA. The HJ becomes 2-fold symmetrical on binding to RuvC with unstacked arms; it has a different conformation from HJ DNA in complex with RuvA. In the full resolvosome a probable DNA-RuvA(4)-RuvB(12)-RuvC(2) complex forms which resolves the HJ. It depends on Mg(2+) as a cofactor.

It localises to the cytoplasm. The enzyme catalyses Endonucleolytic cleavage at a junction such as a reciprocal single-stranded crossover between two homologous DNA duplexes (Holliday junction).. Functionally, the RuvA-RuvB-RuvC complex processes Holliday junction (HJ) DNA during genetic recombination and DNA repair. Endonuclease that resolves HJ intermediates. Cleaves cruciform DNA by making single-stranded nicks across the HJ at symmetrical positions within the homologous arms, yielding a 5'-phosphate and a 3'-hydroxyl group; requires a central core of homology in the junction. The consensus cleavage sequence is 5'-(A/T)TT(C/G)-3'. Cleavage occurs on the 3'-side of the TT dinucleotide at the point of strand exchange. HJ branch migration catalyzed by RuvA-RuvB allows RuvC to scan DNA until it finds its consensus sequence, where it cleaves and resolves the cruciform DNA. The protein is Crossover junction endodeoxyribonuclease RuvC of Shewanella amazonensis (strain ATCC BAA-1098 / SB2B).